We begin with the raw amino-acid sequence, 136 residues long: Classical arabinogalactan protein 11 (136 aa).

Positions 1-20 (MARLFVVVALLALAVGTVFA) are cleaved as a signal peptide. 3 stretches are compositionally biased toward low complexity: residues 24-56 (PSAA…ASSP), 68-81 (SAAS…APTV), and 89-107 (PEAD…PAAA). Positions 24-115 (PSAAPTASPT…AAESPKSGAT (92 aa)) are disordered. Serine 112 carries the GPI-anchor amidated serine lipid modification. A propeptide spans 113–136 (GATTNVKLSIAGTVAAAGFFIFSL) (removed in mature form).

The protein belongs to the classical AGP family. O-glycosylated on the hydroxyproline residues.

The protein resides in the cell membrane. Functionally, proteoglycan that seems to be implicated in diverse developmental roles such as differentiation, cell-cell recognition, embryogenesis and programmed cell death. The chain is Classical arabinogalactan protein 11 (AGP11) from Arabidopsis thaliana (Mouse-ear cress).